Consider the following 619-residue polypeptide: Dihydroxy-acid dehydratase (619 aa).

Residue Asp81 coordinates Mg(2+). Cys122 lines the [2Fe-2S] cluster pocket. Mg(2+) contacts are provided by Asp123 and Lys124. Lys124 carries the N6-carboxylysine modification. A [2Fe-2S] cluster-binding site is contributed by Cys195. Glu492 provides a ligand contact to Mg(2+). The active-site Proton acceptor is Ser518.

The protein belongs to the IlvD/Edd family. In terms of assembly, homodimer. [2Fe-2S] cluster serves as cofactor. Mg(2+) is required as a cofactor.

It carries out the reaction (2R)-2,3-dihydroxy-3-methylbutanoate = 3-methyl-2-oxobutanoate + H2O. The catalysed reaction is (2R,3R)-2,3-dihydroxy-3-methylpentanoate = (S)-3-methyl-2-oxopentanoate + H2O. It participates in amino-acid biosynthesis; L-isoleucine biosynthesis; L-isoleucine from 2-oxobutanoate: step 3/4. The protein operates within amino-acid biosynthesis; L-valine biosynthesis; L-valine from pyruvate: step 3/4. In terms of biological role, functions in the biosynthesis of branched-chain amino acids. Catalyzes the dehydration of (2R,3R)-2,3-dihydroxy-3-methylpentanoate (2,3-dihydroxy-3-methylvalerate) into 2-oxo-3-methylpentanoate (2-oxo-3-methylvalerate) and of (2R)-2,3-dihydroxy-3-methylbutanoate (2,3-dihydroxyisovalerate) into 2-oxo-3-methylbutanoate (2-oxoisovalerate), the penultimate precursor to L-isoleucine and L-valine, respectively. This Synechococcus elongatus (strain ATCC 33912 / PCC 7942 / FACHB-805) (Anacystis nidulans R2) protein is Dihydroxy-acid dehydratase.